The following is a 542-amino-acid chain: CTP synthase (542 aa).

Residues 1-265 (MTRYIFVTGG…DEIIVERFGL (265 aa)) are amidoligase domain. Serine 13 provides a ligand contact to CTP. Serine 13 contributes to the UTP binding site. ATP-binding positions include 14–19 (SLGKGI) and aspartate 71. Residues aspartate 71 and glutamate 139 each coordinate Mg(2+). Residues 146 to 148 (DIE), 186 to 191 (KTKPTQ), and lysine 222 each bind CTP. UTP contacts are provided by residues 186-191 (KTKPTQ) and lysine 222. The 252-residue stretch at 290-541 (TIAMVGKYME…VRAALENAGG (252 aa)) folds into the Glutamine amidotransferase type-1 domain. Glycine 351 is a binding site for L-glutamine. Cysteine 378 serves as the catalytic Nucleophile; for glutamine hydrolysis. L-glutamine-binding positions include 379–382 (LGLQ), glutamate 402, and arginine 469. Active-site residues include histidine 514 and glutamate 516.

This sequence belongs to the CTP synthase family. As to quaternary structure, homotetramer.

It catalyses the reaction UTP + L-glutamine + ATP + H2O = CTP + L-glutamate + ADP + phosphate + 2 H(+). The catalysed reaction is L-glutamine + H2O = L-glutamate + NH4(+). The enzyme catalyses UTP + NH4(+) + ATP = CTP + ADP + phosphate + 2 H(+). It functions in the pathway pyrimidine metabolism; CTP biosynthesis via de novo pathway; CTP from UDP: step 2/2. Allosterically activated by GTP, when glutamine is the substrate; GTP has no effect on the reaction when ammonia is the substrate. The allosteric effector GTP functions by stabilizing the protein conformation that binds the tetrahedral intermediate(s) formed during glutamine hydrolysis. Inhibited by the product CTP, via allosteric rather than competitive inhibition. Functionally, catalyzes the ATP-dependent amination of UTP to CTP with either L-glutamine or ammonia as the source of nitrogen. Regulates intracellular CTP levels through interactions with the four ribonucleotide triphosphates. This Hahella chejuensis (strain KCTC 2396) protein is CTP synthase.